Reading from the N-terminus, the 236-residue chain is Protein YIPF6 (236 aa).

The residue at position 2 (Ala2) is an N-acetylalanine. Over 2–84 (AEAEDSPGEQ…HVLYPRKSNT (83 aa)) the chain is Cytoplasmic. Phosphoserine is present on Ser7. The helical transmembrane segment at 85–105 (LLRDWDLWGPLILCVSLALML) threads the bilayer. Residues 106–116 (QKSSVEGKRDG) are Lumenal-facing. Residues 117 to 137 (GSPEFAEVFVIIWFGAVTITL) traverse the membrane as a helical segment. The Cytoplasmic portion of the chain corresponds to 138–147 (NSKLLGGNIS). A helical membrane pass occupies residues 148 to 168 (FFQSLCVLGYCVLPLNIAMLI). The Lumenal segment spans residues 169–185 (CRLLLLAGQGPINFMIR). Residues 186 to 206 (LFVVLVMFAWSVIASTAFLAD) form a helical membrane-spanning segment. Residues 207–213 (CQPPNRK) are Cytoplasmic-facing. A helical membrane pass occupies residues 214–234 (ALAVYPVFLFYFVVSWMILTF). Over 235 to 236 (TP) the chain is Lumenal.

Belongs to the YIP1 family. Predominantly interacts with YIPF1 or YIPF2, but may also form a ternary complex with YIPF1 and YIPF2. This interaction may stabilize YIPF1 and YIPF2.

It localises to the golgi apparatus membrane. May be required for stable YIPF1 and YIPF2 protein expression. The polypeptide is Protein YIPF6 (Yipf6) (Rattus norvegicus (Rat)).